Reading from the N-terminus, the 142-residue chain is Large ribosomal subunit protein uL11 (142 aa).

Belongs to the universal ribosomal protein uL11 family. In terms of assembly, part of the ribosomal stalk of the 50S ribosomal subunit. Interacts with L10 and the large rRNA to form the base of the stalk. L10 forms an elongated spine to which L12 dimers bind in a sequential fashion forming a multimeric L10(L12)X complex. One or more lysine residues are methylated.

Forms part of the ribosomal stalk which helps the ribosome interact with GTP-bound translation factors. This is Large ribosomal subunit protein uL11 from Sinorhizobium medicae (strain WSM419) (Ensifer medicae).